A 370-amino-acid polypeptide reads, in one-letter code: Cap-specific mRNA (nucleoside-2'-O-)-methyltransferase 1 (370 aa).

Residues 87–294 (AFRNRAGHKL…ERYLVCIGFI (208 aa)) enclose the RrmJ-type SAM-dependent 2'-O-MTase domain. 2 residues coordinate S-adenosyl-L-methionine: Gly130 and Asp207. Residue Lys248 is the Proton acceptor of the active site.

As to quaternary structure, component of a complex composed of CBF5, GAR1, NHP2, MTR1, NOP10 and Tb11.01.8210.

The protein resides in the nucleus. The enzyme catalyses a 5'-end (N(7)-methyl 5'-triphosphoguanosine)-ribonucleoside in mRNA + S-adenosyl-L-methionine = a 5'-end (N(7)-methyl 5'-triphosphoguanosine)-(2'-O-methyl-ribonucleoside) in mRNA + S-adenosyl-L-homocysteine + H(+). In terms of biological role, S-adenosyl-L-methionine-dependent methyltransferase that mediates RNA cap1 2'-O-ribose methylation to the 5'-cap structure of spliced leader and U1 small nuclear RNAs. Methylates the ribose of the first nucleotide of a m(7)GpppG-capped RNA to produce m(7)GpppNmp (cap1). Cap1 modification is linked to higher levels of translation. Recognizes a guanosine cap on RNA independent of its N(7) methylation status. In Trypanosoma brucei brucei (strain 927/4 GUTat10.1), this protein is Cap-specific mRNA (nucleoside-2'-O-)-methyltransferase 1 (MTR1).